A 488-amino-acid polypeptide reads, in one-letter code: Aspartyl/glutamyl-tRNA(Asn/Gln) amidotransferase subunit B (488 aa).

The protein belongs to the GatB/GatE family. GatB subfamily. In terms of assembly, heterotrimer of A, B and C subunits.

The catalysed reaction is L-glutamyl-tRNA(Gln) + L-glutamine + ATP + H2O = L-glutaminyl-tRNA(Gln) + L-glutamate + ADP + phosphate + H(+). It catalyses the reaction L-aspartyl-tRNA(Asn) + L-glutamine + ATP + H2O = L-asparaginyl-tRNA(Asn) + L-glutamate + ADP + phosphate + 2 H(+). Its function is as follows. Allows the formation of correctly charged Asn-tRNA(Asn) or Gln-tRNA(Gln) through the transamidation of misacylated Asp-tRNA(Asn) or Glu-tRNA(Gln) in organisms which lack either or both of asparaginyl-tRNA or glutaminyl-tRNA synthetases. The reaction takes place in the presence of glutamine and ATP through an activated phospho-Asp-tRNA(Asn) or phospho-Glu-tRNA(Gln). The protein is Aspartyl/glutamyl-tRNA(Asn/Gln) amidotransferase subunit B of Chlamydia trachomatis serovar L2 (strain ATCC VR-902B / DSM 19102 / 434/Bu).